The following is a 244-amino-acid chain: tRNA pseudouridine synthase B (244 aa).

The Nucleophile role is filled by aspartate 46.

Belongs to the pseudouridine synthase TruB family. Type 1 subfamily.

The enzyme catalyses uridine(55) in tRNA = pseudouridine(55) in tRNA. Responsible for synthesis of pseudouridine from uracil-55 in the psi GC loop of transfer RNAs. The polypeptide is tRNA pseudouridine synthase B (Bordetella avium (strain 197N)).